Here is a 437-residue protein sequence, read N- to C-terminus: MIERYTRKEMGDVWSEVNKFKKWLDVEIAVCRAWAKLGKIPRDALKKIEEKTYVDKKVVEKIKEKEKVFKHDVLAFVSVIAEQVGEEGRYIHMGLTSSDVVDTALALLIREAIDIILKDIDKVMEEIKRLAFEHKDTLMMGRTHGVHAEPYTFGLKMCVWYDEMRRQKERLLFARENVLYGKISGAVGTYSNIPPEVEKLALEELGLKIEPASTQIVHRDRHAQLLTTLGLIASSLEKFATEIRHLQRTEVLEVLEPFTKGQRGSSAMPHKKNPIHSERICGLARVIRANSIPAMEDVVLWHERDISHSSVERVILPDSFIALDYILNLFYEILKGLVVNKERMRKNMELSKGLYASSKILVLLTQKGLSRDYAYDIVQRCAMKAWESDKTFKETLLEDPEVTKYLTEEEIEKALDPWEFLKNRDYVYEKVFGDEMG.

N(6)-(1,2-dicarboxyethyl)-AMP is bound by residues 4-5 (RY), 70-72 (KHD), and 96-97 (TS). His144 functions as the Proton donor/acceptor in the catalytic mechanism. A N(6)-(1,2-dicarboxyethyl)-AMP-binding site is contributed by Gln215. The Proton donor/acceptor role is filled by Ser265. N(6)-(1,2-dicarboxyethyl)-AMP contacts are provided by residues Ser266, 271-273 (KKN), and 310-314 (SVERV).

It belongs to the lyase 1 family. Adenylosuccinate lyase subfamily. As to quaternary structure, homooligomer. Residues from neighboring subunits contribute catalytic and substrate-binding residues to each active site.

It carries out the reaction N(6)-(1,2-dicarboxyethyl)-AMP = fumarate + AMP. The catalysed reaction is (2S)-2-[5-amino-1-(5-phospho-beta-D-ribosyl)imidazole-4-carboxamido]succinate = 5-amino-1-(5-phospho-beta-D-ribosyl)imidazole-4-carboxamide + fumarate. It participates in purine metabolism; AMP biosynthesis via de novo pathway; AMP from IMP: step 2/2. Its pathway is purine metabolism; IMP biosynthesis via de novo pathway; 5-amino-1-(5-phospho-D-ribosyl)imidazole-4-carboxamide from 5-amino-1-(5-phospho-D-ribosyl)imidazole-4-carboxylate: step 2/2. Functionally, catalyzes two reactions in de novo purine nucleotide biosynthesis. Catalyzes the breakdown of 5-aminoimidazole- (N-succinylocarboxamide) ribotide (SAICAR or 2-[5-amino-1-(5-phospho-beta-D-ribosyl)imidazole-4-carboxamido]succinate) to 5-aminoimidazole-4-carboxamide ribotide (AICAR or 5-amino-1-(5-phospho-beta-D-ribosyl)imidazole-4-carboxamide) and fumarate, and of adenylosuccinate (ADS or N(6)-(1,2-dicarboxyethyl)-AMP) to adenosine monophosphate (AMP) and fumarate. This is Adenylosuccinate lyase (purB) from Aquifex aeolicus (strain VF5).